The chain runs to 468 residues: ATP synthase subunit beta (468 aa).

155-162 (GGAGVGKT) provides a ligand contact to ATP.

This sequence belongs to the ATPase alpha/beta chains family. As to quaternary structure, F-type ATPases have 2 components, CF(1) - the catalytic core - and CF(0) - the membrane proton channel. CF(1) has five subunits: alpha(3), beta(3), gamma(1), delta(1), epsilon(1). CF(0) has three main subunits: a(1), b(2) and c(9-12). The alpha and beta chains form an alternating ring which encloses part of the gamma chain. CF(1) is attached to CF(0) by a central stalk formed by the gamma and epsilon chains, while a peripheral stalk is formed by the delta and b chains.

Its subcellular location is the cell membrane. It carries out the reaction ATP + H2O + 4 H(+)(in) = ADP + phosphate + 5 H(+)(out). Its function is as follows. Produces ATP from ADP in the presence of a proton gradient across the membrane. The catalytic sites are hosted primarily by the beta subunits. The protein is ATP synthase subunit beta of Streptococcus gordonii (strain Challis / ATCC 35105 / BCRC 15272 / CH1 / DL1 / V288).